A 313-amino-acid polypeptide reads, in one-letter code: Ribose-phosphate pyrophosphokinase (313 aa).

Residues 37-39 and 96-97 contribute to the ATP site; these read DGE and RQ. The Mg(2+) site is built by His-131 and Asp-170. Lys-193 is an active-site residue. D-ribose 5-phosphate contacts are provided by residues Arg-195, Asp-219, and 223-227; that span reads DTAGT.

Belongs to the ribose-phosphate pyrophosphokinase family. Class I subfamily. In terms of assembly, homohexamer. The cofactor is Mg(2+).

Its subcellular location is the cytoplasm. The catalysed reaction is D-ribose 5-phosphate + ATP = 5-phospho-alpha-D-ribose 1-diphosphate + AMP + H(+). Its pathway is metabolic intermediate biosynthesis; 5-phospho-alpha-D-ribose 1-diphosphate biosynthesis; 5-phospho-alpha-D-ribose 1-diphosphate from D-ribose 5-phosphate (route I): step 1/1. Involved in the biosynthesis of the central metabolite phospho-alpha-D-ribosyl-1-pyrophosphate (PRPP) via the transfer of pyrophosphoryl group from ATP to 1-hydroxyl of ribose-5-phosphate (Rib-5-P). The sequence is that of Ribose-phosphate pyrophosphokinase from Pseudomonas syringae pv. tomato (strain ATCC BAA-871 / DC3000).